Here is a 178-residue protein sequence, read N- to C-terminus: Caveolin-1 (178 aa).

S2 carries the N-acetylserine modification. Residue S2 is modified to Phosphoserine. The tract at residues 2–94 (SGGKYVDSEG…WKASFTTFTV (93 aa)) is required for homooligomerization. Residues 2–104 (SGGKYVDSEG…TKYWFYRLLS (103 aa)) are Cytoplasmic-facing. K5 is modified (N6-acetyllysine; alternate). K5 participates in a covalent cross-link: Glycyl lysine isopeptide (Lys-Gly) (interchain with G-Cter in ubiquitin); alternate. Position 6 is a phosphotyrosine (Y6). S9 bears the Phosphoserine mark. At Y14 the chain carries Phosphotyrosine; by ABL1. Y25 is modified (phosphotyrosine). Glycyl lysine isopeptide (Lys-Gly) (interchain with G-Cter in ubiquitin) cross-links involve residues K26 and K30. S37 carries the post-translational modification Phosphoserine. Glycyl lysine isopeptide (Lys-Gly) (interchain with G-Cter in ubiquitin) cross-links involve residues K39, K47, and K57. The interval 82 to 94 (DGIWKASFTTFTV) is interaction with CAVIN3. The helical intramembrane region spans 105-125 (ALFGIPMALIWGIYFAILSFL). Residues 126–178 (HIWAVVPCIKSFLIEIQCISRVYSIYVHTVCDPLFEAVGKIFSNVRINLQKEI) lie on the Cytoplasmic side of the membrane. The interacts with SPRY1, SPRY2, SPRY3 and SPRY4 stretch occupies residues 131–142 (VPCIKSFLIEIQ). S-palmitoyl cysteine attachment occurs at residues C133, C143, and C156. Residues 149 to 160 (SIYVHTVCDPLF) form an interacts with SPRY1, SPRY2, and SPRY4 region. Positions 167 to 178 (FSNVRINLQKEI) are interacts with SPRY1, SPRY2, SPRY3 and SPRY4.

The protein belongs to the caveolin family. As to quaternary structure, homooligomer. Interacts with GLIPR2. Interacts with NOSTRIN. Interacts with SNAP25 and STX1A. Interacts (via the N-terminus) with DPP4; the interaction is direct. Interacts with CTNNB1, CDH1 and JUP. Interacts with PACSIN2; this interaction induces membrane tubulation. Interacts with SLC7A9. Interacts with BMX and BTK. Interacts with TGFBR1. Interacts with CAVIN3 (via leucine-zipper domain) in a cholesterol-sensitive manner. Interacts with CAVIN1. Interacts with EHD2 in a cholesterol-dependent manner. Forms a ternary complex with UBXN6 and VCP; mediates CAV1 targeting to lysosomes for degradation. Interacts with ABCG1; this interaction regulates ABCG1-mediated cholesterol efflux. Interacts with NEU3; this interaction enhances NEU3 sialidase activity within caveola. Interacts (via C-terminus) with SPRY1, SPRY2 (via C-terminus), SPRY3, and SPRY4. Interacts with IGFBP5; this interaction allows trafficking of IGFBP5 from the plasma membrane to the nucleus. Post-translationally, phosphorylated at Tyr-14 by ABL1 in response to oxidative stress. In terms of processing, ubiquitinated. Undergo monoubiquitination and multi- and/or polyubiquitination. Monoubiquitination of N-terminal lysines promotes integration in a ternary complex with UBXN6 and VCP which promotes oligomeric CAV1 targeting to lysosomes for degradation. Ubiquitinated by ZNRF1; leading to degradation and modulation of the TLR4-mediated immune response.

The protein localises to the golgi apparatus membrane. It is found in the cell membrane. Its subcellular location is the membrane. The protein resides in the caveola. It localises to the membrane raft. May act as a scaffolding protein within caveolar membranes. Forms a stable heterooligomeric complex with CAV2 that targets to lipid rafts and drives caveolae formation. Mediates the recruitment of CAVIN proteins (CAVIN1/2/3/4) to the caveolae. Interacts directly with G-protein alpha subunits and can functionally regulate their activity. Involved in the costimulatory signal essential for T-cell receptor (TCR)-mediated T-cell activation. Its binding to DPP4 induces T-cell proliferation and NF-kappa-B activation in a T-cell receptor/CD3-dependent manner. Recruits CTNNB1 to caveolar membranes and may regulate CTNNB1-mediated signaling through the Wnt pathway. Negatively regulates TGFB1-mediated activation of SMAD2/3 by mediating the internalization of TGFBR1 from membrane rafts leading to its subsequent degradation. Binds 20(S)-hydroxycholesterol (20(S)-OHC). The protein is Caveolin-1 (CAV1) of Pongo abelii (Sumatran orangutan).